We begin with the raw amino-acid sequence, 502 residues long: Cytochrome P450 71A8 (502 aa).

A helical transmembrane segment spans residues 16–36 (IISHTLAFQALVSLILLISIT). The tract at residues 93-119 (PVSSRRRPRGNHENSRSRLRRPRGSRS) is disordered. Cysteine 447 is a heme binding site.

Belongs to the cytochrome P450 family. It depends on heme as a cofactor.

Its subcellular location is the membrane. The polypeptide is Cytochrome P450 71A8 (CYP71A8) (Mentha piperita (Peppermint)).